A 288-amino-acid polypeptide reads, in one-letter code: Fatty acid-binding protein TM_1468 (288 aa).

One can recognise a DegV domain in the interval 3-283 (VKILVDSTAD…PGTVGFGIEV (281 aa)). Hexadecanoate-binding residues include Thr63 and Ser96.

In terms of assembly, monomer.

Its function is as follows. Binds long-chain fatty acids, such as palmitate, and may play a role in lipid transport or fatty acid metabolism. This chain is Fatty acid-binding protein TM_1468, found in Thermotoga maritima (strain ATCC 43589 / DSM 3109 / JCM 10099 / NBRC 100826 / MSB8).